We begin with the raw amino-acid sequence, 414 residues long: Tryptophan synthase beta chain (414 aa).

The disordered stretch occupies residues 1 to 28 (MVSTISRQDQNNNDDLNQPSKEGRFGKY). The span at 8 to 18 (QDQNNNDDLNQ) shows a compositional bias: low complexity. Lys-108 bears the N6-(pyridoxal phosphate)lysine mark.

Belongs to the TrpB family. As to quaternary structure, tetramer of two alpha and two beta chains. Pyridoxal 5'-phosphate serves as cofactor.

It carries out the reaction (1S,2R)-1-C-(indol-3-yl)glycerol 3-phosphate + L-serine = D-glyceraldehyde 3-phosphate + L-tryptophan + H2O. The protein operates within amino-acid biosynthesis; L-tryptophan biosynthesis; L-tryptophan from chorismate: step 5/5. Functionally, the beta subunit is responsible for the synthesis of L-tryptophan from indole and L-serine. This Prochlorococcus marinus subsp. pastoris (strain CCMP1986 / NIES-2087 / MED4) protein is Tryptophan synthase beta chain.